The chain runs to 212 residues: Pyrrolidone-carboxylate peptidase (212 aa).

Residues glutamate 80, cysteine 143, and histidine 165 contribute to the active site.

It belongs to the peptidase C15 family. Homotetramer.

It localises to the cytoplasm. The catalysed reaction is Release of an N-terminal pyroglutamyl group from a polypeptide, the second amino acid generally not being Pro.. Its function is as follows. Removes 5-oxoproline from various penultimate amino acid residues except L-proline. The sequence is that of Pyrrolidone-carboxylate peptidase from Vibrio parahaemolyticus serotype O3:K6 (strain RIMD 2210633).